A 692-amino-acid chain; its full sequence is A-kinase anchor protein 8 (692 aa).

The interval 1–195 is interaction with MCM2; sequence MDQGYGGYGA…FMRGRGQGRF (195 aa). An interaction with DPY30 region spans residues 1–210; that stretch reads MDQGYGGYGA…PGTFMRSDPF (210 aa). Position 109 is an asymmetric dimethylarginine; alternate (arginine 109). Arginine 109 is modified (omega-N-methylarginine; alternate). Residues 109–201 form an interaction with DDX5 region; it reads RGGSGGGGEG…QGRFQDRSNP (93 aa). Serine 112 is modified (phosphoserine). Disordered stretches follow at residues 168-203, 231-254, and 269-382; these read GQYSECRDPARERGSLDGFMRGRGQGRFQDRSNPGT, GGRGLGGPSPSRPPPSLFSQSMAP, and STMP…RTRD. Residues 172 to 182 are compositionally biased toward basic and acidic residues; it reads ECRDPARERGS. At serine 199 the chain carries Phosphoserine. 2 positions are modified to omega-N-methylarginine: arginine 233 and arginine 277. Basic and acidic residues-rich tracts occupy residues 281–297 and 314–323; these read RMRDRDRPKRRGFDRFG and PDTKLARVDS. Residues 289–306 carry the Bipartite nuclear localization signal motif; it reads KRRGFDRFGPDGTGRKRK. Lysine 317 is covalently cross-linked (Glycyl lysine isopeptide (Lys-Gly) (interchain with G-Cter in SUMO2)). A phosphoserine mark is found at serine 323, serine 328, and serine 339. The span at 324–334 shows a compositional bias: acidic residues; sequence EGDFSENDDAA. The tract at residues 387–450 is involved in chromatin-binding; sequence RIQFACSVCK…NKKIEKRRQE (64 aa). C2H2 AKAP95-type zinc fingers lie at residues 392–414 and 481–504; these read CSVCKFRSFDDEEIQKHLQSKFH and CLACDMLIPAQPQLLQRHLHSVDH. Residues 525–569 form an involved in condensin complex recruitment region; that stretch reads SVLNNRHIVKMLEKYLKGEDPFTSETVDPEMEGDDNLGGEDKKET. Residues 545–571 are disordered; it reads PFTSETVDPEMEGDDNLGGEDKKETPE. The segment covering 551 to 562 has biased composition (acidic residues); it reads VDPEMEGDDNLG. Residue lysine 567 forms a Glycyl lysine isopeptide (Lys-Gly) (interchain with G-Cter in SUMO2) linkage. Residues 572-589 form an RII-binding region; sequence EVAADVLAEVITAAVRAV. The interval 576–593 is required for interaction with MYCBP; the sequence is DVLAEVITAAVRAVDGEG. Residues 592–692 form a disordered region; sequence EGAPAPESSG…AESKDAVPTE (101 aa). Residues 634–646 are compositionally biased toward basic and acidic residues; the sequence is AHEKGVPKARSEA. Serine 662 bears the Phosphoserine mark. The span at 663-675 shows a compositional bias: low complexity; that stretch reads AQTRVAPAPAAAD. Basic and acidic residues predominate over residues 683 to 692; it reads AESKDAVPTE. Phosphoserine is present on serine 685.

This sequence belongs to the AKAP95 family. As to quaternary structure, binds to the PKA RII-alpha regulatory subunit PRKAR2A (phosphorylated at 'Thr-54') during mitosis. Interacts (via C-terminus) with FIGN. Interacts with NCAPD2, CCND1, MCM2, RPS6KA1, PDE4A. Interacts with CCND3, CCNE1, DDX5, CASP3. Interacts with NFKB1; detetcted in the cytoplasm. Interacts with MYCBP; MYCBP is translocated to the nucleus and the interaction prevents the association of the PKA catalytic subunit leading to suppression of PKA activity. Interacts with DPY30; mediating AKAP8 association with at least the MLL4/WBP7 HMT complex. Interacts with HDAC3; increased during mitosis. Interacts with GJA1; in the nucleus and in the nuclear membrane; the nuclear association increases with progress of cell cycle G1, S and G2 phase and decreases in M phase. Post-translationally, phosphorylated on tyrosine residues probably by SRC subfamily protein kinases; multiple phosphorylation is leading to dissociation from nuclear structures implicated in chromatin structural changes. As to expression, highly expressed in heart, liver, skeletal muscle, kidney and pancreas. Expressed in mature dendritic cells.

The protein resides in the nucleus. It is found in the nucleus matrix. The protein localises to the nucleolus. Its subcellular location is the cytoplasm. Functionally, anchoring protein that mediates the subcellular compartmentation of cAMP-dependent protein kinase (PKA type II). Acts as an anchor for a PKA-signaling complex onto mitotic chromosomes, which is required for maintenance of chromosomes in a condensed form throughout mitosis. Recruits condensin complex subunit NCAPD2 to chromosomes required for chromatin condensation; the function appears to be independent from PKA-anchoring. May help to deliver cyclin D/E to CDK4 to facilitate cell cycle progression. Required for cell cycle G2/M transition and histone deacetylation during mitosis. In mitotic cells recruits HDAC3 to the vicinity of chromatin leading to deacetylation and subsequent phosphorylation at 'Ser-10' of histone H3; in this function may act redundantly with AKAP8L. Involved in nuclear retention of RPS6KA1 upon ERK activation thus inducing cell proliferation. May be involved in regulation of DNA replication by acting as scaffold for MCM2. Enhances HMT activity of the KMT2 family MLL4/WBP7 complex and is involved in transcriptional regulation. In a teratocarcinoma cell line is involved in retinoic acid-mediated induction of developmental genes implicating H3 'Lys-4' methylation. May be involved in recruitment of active CASP3 to the nucleus in apoptotic cells. May act as a carrier protein of GJA1 for its transport to the nucleus. May play a repressive role in the regulation of rDNA transcription. Preferentially binds GC-rich DNA in vitro. In cells, associates with ribosomal RNA (rRNA) chromatin, preferentially with rRNA promoter and transcribed regions. Involved in modulation of Toll-like receptor signaling. Required for the cAMP-dependent suppression of TNF-alpha in early stages of LPS-induced macrophage activation; the function probably implicates targeting of PKA to NFKB1. The protein is A-kinase anchor protein 8 (AKAP8) of Homo sapiens (Human).